Consider the following 729-residue polypeptide: Fatty acid oxidation complex subunit alpha (729 aa).

Residues 1 to 189 (MLYKGDTLYL…KIGLVDGVVK (189 aa)) form an enoyl-CoA hydratase/isomerase region. Asp296 provides a ligand contact to substrate. The 3-hydroxyacyl-CoA dehydrogenase stretch occupies residues 311–729 (ETPKQAAVLG…ARPVGDLKTA (419 aa)). NAD(+)-binding positions include Met324, Asp343, 400–402 (VVE), Lys407, and Ser429. The For 3-hydroxyacyl-CoA dehydrogenase activity role is filled by His450. Asn453 provides a ligand contact to NAD(+). Positions 500 and 660 each coordinate substrate. A disordered region spans residues 707–729 (ARHNEPYYPPVEPARPVGDLKTA).

This sequence in the N-terminal section; belongs to the enoyl-CoA hydratase/isomerase family. It in the C-terminal section; belongs to the 3-hydroxyacyl-CoA dehydrogenase family. Heterotetramer of two alpha chains (FadB) and two beta chains (FadA).

The catalysed reaction is a (3S)-3-hydroxyacyl-CoA + NAD(+) = a 3-oxoacyl-CoA + NADH + H(+). It catalyses the reaction a (3S)-3-hydroxyacyl-CoA = a (2E)-enoyl-CoA + H2O. It carries out the reaction a 4-saturated-(3S)-3-hydroxyacyl-CoA = a (3E)-enoyl-CoA + H2O. The enzyme catalyses (3S)-3-hydroxybutanoyl-CoA = (3R)-3-hydroxybutanoyl-CoA. The catalysed reaction is a (3Z)-enoyl-CoA = a 4-saturated (2E)-enoyl-CoA. It catalyses the reaction a (3E)-enoyl-CoA = a 4-saturated (2E)-enoyl-CoA. It functions in the pathway lipid metabolism; fatty acid beta-oxidation. Functionally, involved in the aerobic and anaerobic degradation of long-chain fatty acids via beta-oxidation cycle. Catalyzes the formation of 3-oxoacyl-CoA from enoyl-CoA via L-3-hydroxyacyl-CoA. It can also use D-3-hydroxyacyl-CoA and cis-3-enoyl-CoA as substrate. This chain is Fatty acid oxidation complex subunit alpha, found in Escherichia coli O6:K15:H31 (strain 536 / UPEC).